A 188-amino-acid chain; its full sequence is Elongation factor P (188 aa).

The protein belongs to the elongation factor P family.

The protein resides in the cytoplasm. Its pathway is protein biosynthesis; polypeptide chain elongation. Functionally, involved in peptide bond synthesis. Stimulates efficient translation and peptide-bond synthesis on native or reconstituted 70S ribosomes in vitro. Probably functions indirectly by altering the affinity of the ribosome for aminoacyl-tRNA, thus increasing their reactivity as acceptors for peptidyl transferase. In Flavobacterium johnsoniae (strain ATCC 17061 / DSM 2064 / JCM 8514 / BCRC 14874 / CCUG 350202 / NBRC 14942 / NCIMB 11054 / UW101) (Cytophaga johnsonae), this protein is Elongation factor P.